The following is a 399-amino-acid chain: Nuclear hormone receptor family member nhr-125 (399 aa).

The nuclear receptor DNA-binding region spans 10-80 (PFSCRICNQK…MGMDTTKFQY (71 aa)). 2 NR C4-type zinc fingers span residues 13-33 (CRIC…CRAC) and 50-63 (CQKG…CKRC). The NR LBD domain occupies 149-392 (QLENLTEGFK…EKLQKSQFSI (244 aa)).

Belongs to the nuclear hormone receptor family.

The protein localises to the nucleus. Functionally, orphan nuclear receptor. The chain is Nuclear hormone receptor family member nhr-125 (nhr-125) from Caenorhabditis elegans.